The following is a 74-amino-acid chain: Antimicrobial peptide ToAp1 (74 aa).

The N-terminal stretch at Met1–Ala22 is a signal peptide. A Lysine amide modification is found at Lys39. Positions Gly40–Tyr74 are excised as a propeptide.

It belongs to the non-disulfide-bridged peptide (NDBP) superfamily. Short antimicrobial peptide (group 4) family. Expressed by the venom gland.

It localises to the secreted. In terms of biological role, antimicrobial peptide. Is able to kill Mycobacterium abscessus subsp. massiliense in a dose-dependent manner. Has antifungal activity against Candida spp. and one Cryptococcus neoformans strains with MICs values ranging from 12.5 to 200 uM. Also shows an inhibitory activity on C.albicans biofilms at high concentrations. Shows low cytotoxic activity and has weak hemolytic activity on human erythrocytes. Shows anti-inflammatory activities, since it decreases release of pro-inflammatory cytokines, and increases release of anti-inflammatory cytokines. Acts by blocking the Toll-like receptor 4 (TLR4). In addition, decreases the expression of costimulatory molecules such as CD80 and CD86 in LPS-stimulated cells. In vivo, does not induce immune cell migration. Helical wheel projections predict an amphipathic peptide with distinct hydrophobic and hydrophilic faces. The chain is Antimicrobial peptide ToAp1 from Tityus obscurus (Amazonian scorpion).